The following is a 127-amino-acid chain: Ribosome-binding factor A (127 aa).

The protein belongs to the RbfA family. Monomer. Binds 30S ribosomal subunits, but not 50S ribosomal subunits or 70S ribosomes.

It is found in the cytoplasm. Functionally, one of several proteins that assist in the late maturation steps of the functional core of the 30S ribosomal subunit. Associates with free 30S ribosomal subunits (but not with 30S subunits that are part of 70S ribosomes or polysomes). Required for efficient processing of 16S rRNA. May interact with the 5'-terminal helix region of 16S rRNA. The protein is Ribosome-binding factor A of Aromatoleum aromaticum (strain DSM 19018 / LMG 30748 / EbN1) (Azoarcus sp. (strain EbN1)).